A 250-amino-acid polypeptide reads, in one-letter code: Vacuolar protein sorting-associated protein 22 homolog 1 (250 aa).

Residues 35 to 55 (MKEQLSTFRSQLEEFARKHKN) are a coiled coil.

It belongs to the SNF8 family. As to quaternary structure, component of the endosomal sorting complex required for transport II (ESCRT-II), composed of VPS22, VPS25 and VPS36.

It is found in the endosome. Its function is as follows. Component of the endosomal sorting complex required for transport II (ESCRT-II), which is required for multivesicular body (MVB) formation and sorting of endosomal cargo proteins into MVBs. The ESCRT-II complex is probably involved in the recruitment of the ESCRT-III complex. In Arabidopsis thaliana (Mouse-ear cress), this protein is Vacuolar protein sorting-associated protein 22 homolog 1 (VP22-1).